The following is a 171-amino-acid chain: ATP synthase subunit b (171 aa).

A helical membrane pass occupies residues 31 to 51; that stretch reads FFVVLAIFLVVLAVIGTFVVP.

Belongs to the ATPase B chain family. As to quaternary structure, F-type ATPases have 2 components, F(1) - the catalytic core - and F(0) - the membrane proton channel. F(1) has five subunits: alpha(3), beta(3), gamma(1), delta(1), epsilon(1). F(0) has three main subunits: a(1), b(2) and c(10-14). The alpha and beta chains form an alternating ring which encloses part of the gamma chain. F(1) is attached to F(0) by a central stalk formed by the gamma and epsilon chains, while a peripheral stalk is formed by the delta and b chains.

It is found in the cell membrane. Its function is as follows. F(1)F(0) ATP synthase produces ATP from ADP in the presence of a proton or sodium gradient. F-type ATPases consist of two structural domains, F(1) containing the extramembraneous catalytic core and F(0) containing the membrane proton channel, linked together by a central stalk and a peripheral stalk. During catalysis, ATP synthesis in the catalytic domain of F(1) is coupled via a rotary mechanism of the central stalk subunits to proton translocation. Component of the F(0) channel, it forms part of the peripheral stalk, linking F(1) to F(0). The sequence is that of ATP synthase subunit b from Mycobacterium bovis (strain ATCC BAA-935 / AF2122/97).